The chain runs to 306 residues: Ribonuclease Z (306 aa).

Zn(2+) contacts are provided by histidine 63, histidine 65, aspartate 67, histidine 68, histidine 141, aspartate 211, and histidine 269. Aspartate 67 functions as the Proton acceptor in the catalytic mechanism.

The protein belongs to the RNase Z family. Homodimer. It depends on Zn(2+) as a cofactor.

The catalysed reaction is Endonucleolytic cleavage of RNA, removing extra 3' nucleotides from tRNA precursor, generating 3' termini of tRNAs. A 3'-hydroxy group is left at the tRNA terminus and a 5'-phosphoryl group is left at the trailer molecule.. In terms of biological role, zinc phosphodiesterase, which displays some tRNA 3'-processing endonuclease activity. Probably involved in tRNA maturation, by removing a 3'-trailer from precursor tRNA. The chain is Ribonuclease Z from Staphylococcus aureus (strain bovine RF122 / ET3-1).